A 427-amino-acid polypeptide reads, in one-letter code: Gamma-glutamyl phosphate reductase (427 aa).

Belongs to the gamma-glutamyl phosphate reductase family.

The protein resides in the cytoplasm. The catalysed reaction is L-glutamate 5-semialdehyde + phosphate + NADP(+) = L-glutamyl 5-phosphate + NADPH + H(+). Its pathway is amino-acid biosynthesis; L-proline biosynthesis; L-glutamate 5-semialdehyde from L-glutamate: step 2/2. Catalyzes the NADPH-dependent reduction of L-glutamate 5-phosphate into L-glutamate 5-semialdehyde and phosphate. The product spontaneously undergoes cyclization to form 1-pyrroline-5-carboxylate. In Bifidobacterium adolescentis (strain ATCC 15703 / DSM 20083 / NCTC 11814 / E194a), this protein is Gamma-glutamyl phosphate reductase.